A 367-amino-acid polypeptide reads, in one-letter code: Chorismate synthase (367 aa).

Arg-48 provides a ligand contact to NADP(+). FMN is bound by residues 125-127, 238-239, Gly-278, 293-297, and Arg-319; these read RSS, NA, and KPTSS.

This sequence belongs to the chorismate synthase family. Homotetramer. It depends on FMNH2 as a cofactor.

The catalysed reaction is 5-O-(1-carboxyvinyl)-3-phosphoshikimate = chorismate + phosphate. It participates in metabolic intermediate biosynthesis; chorismate biosynthesis; chorismate from D-erythrose 4-phosphate and phosphoenolpyruvate: step 7/7. Catalyzes the anti-1,4-elimination of the C-3 phosphate and the C-6 proR hydrogen from 5-enolpyruvylshikimate-3-phosphate (EPSP) to yield chorismate, which is the branch point compound that serves as the starting substrate for the three terminal pathways of aromatic amino acid biosynthesis. This reaction introduces a second double bond into the aromatic ring system. This chain is Chorismate synthase, found in Halorhodospira halophila (strain DSM 244 / SL1) (Ectothiorhodospira halophila (strain DSM 244 / SL1)).